The sequence spans 1318 residues: Serine/threonine-protein kinase ppk18 (1318 aa).

Positions 431–485 are disordered; the sequence is PSVSPEEVHDISQFNHRNDPPITAASVDSSNSFSVHRSSTNHSSTNSGSPNLSRR. The segment covering 462 to 479 has biased composition (low complexity); it reads SFSVHRSSTNHSSTNSGS. The 369-residue stretch at 566–934 folds into the Protein kinase domain; that stretch reads YEIIKPISKG…INEIKEHPFF (369 aa). ATP is bound by residues 572-580 and lysine 595; that span reads ISKGTFGTV. Aspartate 690 (proton acceptor) is an active-site residue. Positions 935 to 1044 constitute an AGC-kinase C-terminal domain; that stretch reads NGINWDDIFS…KNLSVLERAN (110 aa). Disordered regions lie at residues 968–1022, 1058–1078, and 1091–1127; these read GAAE…FSEA, KLHI…DMPS, and SLMT…GPKS. Polar residues predominate over residues 972 to 1000; sequence SNMSSSVNSGEEVSKDNNVSQERGSQFLR. The segment covering 1091–1115 has biased composition (polar residues); it reads SLMTNQGSNFSSTDSTPRKSINSSD. Basic and acidic residues predominate over residues 1116–1127; it reads VESRSKTDGPKS. The Response regulatory domain occupies 1200–1316; it reads KALICVSKLN…LLRGYIARLC (117 aa).

Belongs to the protein kinase superfamily. Ser/Thr protein kinase family.

Its subcellular location is the cytoplasm. The catalysed reaction is L-seryl-[protein] + ATP = O-phospho-L-seryl-[protein] + ADP + H(+). It catalyses the reaction L-threonyl-[protein] + ATP = O-phospho-L-threonyl-[protein] + ADP + H(+). The sequence is that of Serine/threonine-protein kinase ppk18 (ppk18) from Schizosaccharomyces pombe (strain 972 / ATCC 24843) (Fission yeast).